The following is a 547-amino-acid chain: Apolipoprotein N-acyltransferase (547 aa).

A run of 5 helical transmembrane segments spans residues isoleucine 31–phenylalanine 51, phenylalanine 71–tyrosine 91, leucine 106–glycine 126, leucine 180–valine 200, and alanine 210–tryptophan 230. Positions valine 247–phenylalanine 515 constitute a CN hydrolase domain. Glutamate 294 (proton acceptor) is an active-site residue. Residue lysine 364 is part of the active site. Residue cysteine 418 is the Nucleophile of the active site. Residues phenylalanine 515 to isoleucine 535 form a helical membrane-spanning segment.

This sequence belongs to the CN hydrolase family. Apolipoprotein N-acyltransferase subfamily.

The protein resides in the cell inner membrane. The enzyme catalyses N-terminal S-1,2-diacyl-sn-glyceryl-L-cysteinyl-[lipoprotein] + a glycerophospholipid = N-acyl-S-1,2-diacyl-sn-glyceryl-L-cysteinyl-[lipoprotein] + a 2-acyl-sn-glycero-3-phospholipid + H(+). The protein operates within protein modification; lipoprotein biosynthesis (N-acyl transfer). Functionally, catalyzes the phospholipid dependent N-acylation of the N-terminal cysteine of apolipoprotein, the last step in lipoprotein maturation. This chain is Apolipoprotein N-acyltransferase, found in Bdellovibrio bacteriovorus (strain ATCC 15356 / DSM 50701 / NCIMB 9529 / HD100).